The sequence spans 347 residues: Uroporphyrinogen decarboxylase (347 aa).

Substrate-binding positions include 24-28 (RQAGR), F42, D73, Y150, T205, and H320.

It belongs to the uroporphyrinogen decarboxylase family. Homodimer.

It is found in the cytoplasm. It carries out the reaction uroporphyrinogen III + 4 H(+) = coproporphyrinogen III + 4 CO2. It participates in porphyrin-containing compound metabolism; protoporphyrin-IX biosynthesis; coproporphyrinogen-III from 5-aminolevulinate: step 4/4. In terms of biological role, catalyzes the decarboxylation of four acetate groups of uroporphyrinogen-III to yield coproporphyrinogen-III. This Gloeobacter violaceus (strain ATCC 29082 / PCC 7421) protein is Uroporphyrinogen decarboxylase.